A 258-amino-acid chain; its full sequence is UPF0246 protein PM0066 (258 aa).

The protein belongs to the UPF0246 family.

The chain is UPF0246 protein PM0066 from Pasteurella multocida (strain Pm70).